Reading from the N-terminus, the 476-residue chain is Glutamate--tRNA ligase (476 aa).

A 'HIGH' region motif is present at residues 9–19 (PSPTGKLHIGT). Over residues 109 to 129 (REEQKSRNKPPRYDNRHRSLS) the composition is skewed to basic and acidic residues. The segment at 109–133 (REEQKSRNKPPRYDNRHRSLSTEEE) is disordered. The 'KMSKS' region signature appears at 248–252 (KLSKR). Residue K251 participates in ATP binding.

It belongs to the class-I aminoacyl-tRNA synthetase family. Glutamate--tRNA ligase type 1 subfamily. As to quaternary structure, monomer.

The protein localises to the cytoplasm. The catalysed reaction is tRNA(Glu) + L-glutamate + ATP = L-glutamyl-tRNA(Glu) + AMP + diphosphate. Its function is as follows. Catalyzes the attachment of glutamate to tRNA(Glu) in a two-step reaction: glutamate is first activated by ATP to form Glu-AMP and then transferred to the acceptor end of tRNA(Glu). This is Glutamate--tRNA ligase from Prochlorococcus marinus (strain MIT 9211).